The following is a 241-amino-acid chain: Phosphoglycolate phosphatase (241 aa).

Catalysis depends on Asp-8, which acts as the Nucleophile. Mg(2+)-binding residues include Asp-8, Asp-10, and Asp-174.

The protein belongs to the HAD-like hydrolase superfamily. CbbY/CbbZ/Gph/YieH family. Mg(2+) is required as a cofactor.

The catalysed reaction is 2-phosphoglycolate + H2O = glycolate + phosphate. The protein operates within organic acid metabolism; glycolate biosynthesis; glycolate from 2-phosphoglycolate: step 1/1. Specifically catalyzes the dephosphorylation of 2-phosphoglycolate. Is involved in the dissimilation of the intracellular 2-phosphoglycolate formed during the DNA repair of 3'-phosphoglycolate ends, a major class of DNA lesions induced by oxidative stress. This chain is Phosphoglycolate phosphatase, found in Rhodospirillum rubrum (strain ATCC 11170 / ATH 1.1.1 / DSM 467 / LMG 4362 / NCIMB 8255 / S1).